The chain runs to 140 residues: Nucleoside diphosphate kinase (140 aa).

Positions 11, 59, 87, 93, 104, and 114 each coordinate ATP. His117 functions as the Pros-phosphohistidine intermediate in the catalytic mechanism.

It belongs to the NDK family. Homotetramer. The cofactor is Mg(2+).

The protein resides in the cytoplasm. The enzyme catalyses a 2'-deoxyribonucleoside 5'-diphosphate + ATP = a 2'-deoxyribonucleoside 5'-triphosphate + ADP. The catalysed reaction is a ribonucleoside 5'-diphosphate + ATP = a ribonucleoside 5'-triphosphate + ADP. Functionally, major role in the synthesis of nucleoside triphosphates other than ATP. The ATP gamma phosphate is transferred to the NDP beta phosphate via a ping-pong mechanism, using a phosphorylated active-site intermediate. The chain is Nucleoside diphosphate kinase from Ruegeria pomeroyi (strain ATCC 700808 / DSM 15171 / DSS-3) (Silicibacter pomeroyi).